The chain runs to 37 residues: ATP synthase subunit O, mitochondrial (37 aa).

This sequence belongs to the ATPase delta chain family. In terms of assembly, F-type ATPases have 2 components, CF(1) - the catalytic core - and CF(0) - the membrane proton channel. CF(1) has five subunits: alpha(3), beta(3), gamma(1), delta(1), epsilon(1). CF(0) has three main subunits: a, b and c.

It localises to the mitochondrion. The protein localises to the mitochondrion inner membrane. In terms of biological role, mitochondrial membrane ATP synthase (F(1)F(0) ATP synthase or Complex V) produces ATP from ADP in the presence of a proton gradient across the membrane which is generated by electron transport complexes of the respiratory chain. F-type ATPases consist of two structural domains, F(1) - containing the extramembraneous catalytic core and F(0) - containing the membrane proton channel, linked together by a central stalk and a peripheral stalk. During catalysis, ATP synthesis in the catalytic domain of F(1) is coupled via a rotary mechanism of the central stalk subunits to proton translocation. Part of the complex F(0) domain and the peripheric stalk, which acts as a stator to hold the catalytic alpha(3)beta(3) subcomplex and subunit a/ATP6 static relative to the rotary elements. This chain is ATP synthase subunit O, mitochondrial, found in Solanum tuberosum (Potato).